A 429-amino-acid chain; its full sequence is uncharacterized protein (429 aa).

This is an uncharacterized protein from Mycobacterium tuberculosis (strain CDC 1551 / Oshkosh).